We begin with the raw amino-acid sequence, 88 residues long: MTLSLVLFLIGILGFILNRKNIILMIISIEIMLLAVTLLVLVSSYQFDDIMGQTYSIYIIAIAGAESAIGLGILVAYYRLRGNISLRT.

2 helical membrane passes run 22-42 and 57-77; these read IILM…LVLV and IYII…LVAY.

It belongs to the complex I subunit 4L family.

Its subcellular location is the mitochondrion membrane. The catalysed reaction is a ubiquinone + NADH + 5 H(+)(in) = a ubiquinol + NAD(+) + 4 H(+)(out). Functionally, core subunit of the mitochondrial membrane respiratory chain NADH dehydrogenase (Complex I) that is believed to belong to the minimal assembly required for catalysis. Complex I functions in the transfer of electrons from NADH to the respiratory chain. The immediate electron acceptor for the enzyme is believed to be ubiquinone. This Trimorphomyces papilionaceus (Jelly fungus) protein is NADH-ubiquinone oxidoreductase chain 4L (ND4L).